Consider the following 369-residue polypeptide: Phosphoribosyl pyrophosphate synthase-associated protein 2 (369 aa).

The residue at position 1 (methionine 1) is an N-acetylmethionine. Position 5 is a phosphothreonine (threonine 5). Serine 219, serine 227, and serine 233 each carry phosphoserine.

Belongs to the ribose-phosphate pyrophosphokinase family. Binds to PRPS1 and PRPS2.

Functionally, seems to play a negative regulatory role in 5-phosphoribose 1-diphosphate synthesis. The protein is Phosphoribosyl pyrophosphate synthase-associated protein 2 (PRPSAP2) of Pongo abelii (Sumatran orangutan).